The primary structure comprises 257 residues: Hydroxyethylthiazole kinase (257 aa).

Met49 serves as a coordination point for substrate. Residues Arg124 and Thr170 each contribute to the ATP site. Gly197 serves as a coordination point for substrate.

Belongs to the Thz kinase family. Requires Mg(2+) as cofactor.

The enzyme catalyses 5-(2-hydroxyethyl)-4-methylthiazole + ATP = 4-methyl-5-(2-phosphooxyethyl)-thiazole + ADP + H(+). Its pathway is cofactor biosynthesis; thiamine diphosphate biosynthesis; 4-methyl-5-(2-phosphoethyl)-thiazole from 5-(2-hydroxyethyl)-4-methylthiazole: step 1/1. In terms of biological role, catalyzes the phosphorylation of the hydroxyl group of 4-methyl-5-beta-hydroxyethylthiazole (THZ). The polypeptide is Hydroxyethylthiazole kinase (Klebsiella pneumoniae subsp. pneumoniae (strain ATCC 700721 / MGH 78578)).